Consider the following 101-residue polypeptide: Biogenesis of lysosome-related organelles complex 1 subunit BLS1 (101 aa).

This sequence belongs to the BLOC1S1 family. As to quaternary structure, component of the biogenesis of lysosome-related organelles complex-1 (BLOC-1).

It is found in the endosome. Functionally, component of the biogenesis of lysosome-related organelles complex-1 (BLOC-1), a complex involved in endosomal cargo sorting. The polypeptide is Biogenesis of lysosome-related organelles complex 1 subunit BLS1 (BLS1) (Zygosaccharomyces rouxii (strain ATCC 2623 / CBS 732 / NBRC 1130 / NCYC 568 / NRRL Y-229)).